A 295-amino-acid polypeptide reads, in one-letter code: MTNVTGTERVKRGMAEMQKGGVIMDVINAEQAKIAEEAGAVAVMALERVPADIRAAGGVSRMADPTIVEEVMGAVSIPVMAKCRIGHLVEARVLESLGVDYIDESEVLTPADEVYHLNKRDYTVPFVCGCRDIGEAARRIAEGASMLRTKGEPGTGNIVEAVRHMRQVNAEIRQVASLREDELMTYAKNTGAPYEVLREIKRLGRLPVVNFAAGGVATPADAALMMQLGADGVFVGSGIFKSENPAKFARAIVEATTHYEDYELIASLSKGLGNAMKGIEISTLLPEQRMQERGW.

Residue Asp25 coordinates D-ribose 5-phosphate. The active-site Schiff-base intermediate with D-ribose 5-phosphate is Lys82. Gly154 provides a ligand contact to D-ribose 5-phosphate. Arg166 provides a ligand contact to D-glyceraldehyde 3-phosphate. Residues Gly215 and 236–237 (GS) each bind D-ribose 5-phosphate.

It belongs to the PdxS/SNZ family. As to quaternary structure, in the presence of PdxT, forms a dodecamer of heterodimers.

It catalyses the reaction aldehydo-D-ribose 5-phosphate + D-glyceraldehyde 3-phosphate + L-glutamine = pyridoxal 5'-phosphate + L-glutamate + phosphate + 3 H2O + H(+). It functions in the pathway cofactor biosynthesis; pyridoxal 5'-phosphate biosynthesis. Functionally, catalyzes the formation of pyridoxal 5'-phosphate from ribose 5-phosphate (RBP), glyceraldehyde 3-phosphate (G3P) and ammonia. The ammonia is provided by the PdxT subunit. Can also use ribulose 5-phosphate and dihydroxyacetone phosphate as substrates, resulting from enzyme-catalyzed isomerization of RBP and G3P, respectively. The protein is Pyridoxal 5'-phosphate synthase subunit PdxS of Bacillus cereus (strain Q1).